Consider the following 103-residue polypeptide: uncharacterized protein (103 aa).

The EthD domain occupies 12 to 88 (ADPAAFDEHY…AAADVANFAS (77 aa)).

This is an uncharacterized protein from Rhodococcus erythropolis (Arthrobacter picolinophilus).